The following is a 225-amino-acid chain: Uracil-DNA glycosylase 1 (225 aa).

Asp68 (proton acceptor) is an active-site residue.

It belongs to the uracil-DNA glycosylase (UDG) superfamily. UNG family.

The protein resides in the cytoplasm. The enzyme catalyses Hydrolyzes single-stranded DNA or mismatched double-stranded DNA and polynucleotides, releasing free uracil.. In terms of biological role, excises uracil residues from the DNA which can arise as a result of misincorporation of dUMP residues by DNA polymerase or due to deamination of cytosine. The sequence is that of Uracil-DNA glycosylase 1 (ung1) from Streptomyces coelicolor (strain ATCC BAA-471 / A3(2) / M145).